Consider the following 217-residue polypeptide: Large ribosomal subunit protein uL1 (217 aa).

The residue at position 11 (Y11) is a Phosphotyrosine. 2 positions are modified to N6-acetyllysine: K91 and K106. K118 is modified (N6-acetyllysine; alternate). A Glycyl lysine isopeptide (Lys-Gly) (interchain with G-Cter in SUMO1); alternate cross-link involves residue K118. Residue K118 forms a Glycyl lysine isopeptide (Lys-Gly) (interchain with G-Cter in SUMO2); alternate linkage. K161 participates in a covalent cross-link: Glycyl lysine isopeptide (Lys-Gly) (interchain with G-Cter in SUMO2).

It belongs to the universal ribosomal protein uL1 family. As to quaternary structure, component of the large ribosomal subunit.

The protein localises to the cytoplasm. Component of the large ribosomal subunit. The ribosome is a large ribonucleoprotein complex responsible for the synthesis of proteins in the cell. This Oryctolagus cuniculus (Rabbit) protein is Large ribosomal subunit protein uL1 (RPL10A).